The following is a 306-amino-acid chain: tRNA dimethylallyltransferase (306 aa).

ATP is bound at residue 11-18 (GPTAVGKS). Residue 13–18 (TAVGKS) participates in substrate binding. The segment at 35–38 (DSIQ) is interaction with substrate tRNA.

Belongs to the IPP transferase family. In terms of assembly, monomer. Mg(2+) serves as cofactor.

It catalyses the reaction adenosine(37) in tRNA + dimethylallyl diphosphate = N(6)-dimethylallyladenosine(37) in tRNA + diphosphate. Functionally, catalyzes the transfer of a dimethylallyl group onto the adenine at position 37 in tRNAs that read codons beginning with uridine, leading to the formation of N6-(dimethylallyl)adenosine (i(6)A). This chain is tRNA dimethylallyltransferase, found in Borreliella burgdorferi (strain ZS7) (Borrelia burgdorferi).